We begin with the raw amino-acid sequence, 334 residues long: ELMO domain-containing protein 1 (334 aa).

The ELMO domain maps to 133–314; it reads QHEEMLLKLW…KFRKRIIKQL (182 aa).

Its function is as follows. Acts as a GTPase-activating protein (GAP) toward guanine nucleotide exchange factors like ARL2, ARL3, ARF1 and ARF6, but not for GTPases outside the Arf family. This Homo sapiens (Human) protein is ELMO domain-containing protein 1 (ELMOD1).